A 72-amino-acid polypeptide reads, in one-letter code: Exodeoxyribonuclease 7 small subunit (72 aa).

Belongs to the XseB family. In terms of assembly, heterooligomer composed of large and small subunits.

The protein localises to the cytoplasm. The enzyme catalyses Exonucleolytic cleavage in either 5'- to 3'- or 3'- to 5'-direction to yield nucleoside 5'-phosphates.. Its function is as follows. Bidirectionally degrades single-stranded DNA into large acid-insoluble oligonucleotides, which are then degraded further into small acid-soluble oligonucleotides. This is Exodeoxyribonuclease 7 small subunit from Chlamydia muridarum (strain MoPn / Nigg).